The following is a 360-amino-acid chain: Heat-inducible transcription repressor HrcA (360 aa).

This sequence belongs to the HrcA family.

Functionally, negative regulator of class I heat shock genes (grpE-dnaK-dnaJ and groELS operons). Prevents heat-shock induction of these operons. This is Heat-inducible transcription repressor HrcA from Streptococcus thermophilus (strain CNRZ 1066).